The chain runs to 1109 residues: ABC transporter G family member 28 (1109 aa).

Transmembrane regions (helical) follow at residues 5 to 25 (NSYF…LILQ) and 291 to 311 (NITA…IILY). Residues 325 to 411 (QAKSREKAVQ…DTKKGKKKEK (87 aa)) are disordered. The span at 339–357 (SQSREKWKSAKDIAKKHAT) shows a compositional bias: basic and acidic residues. In terms of domain architecture, ABC transporter spans 499–741 (VAFKDLSITL…FSSLGIVVPE (243 aa)). ATP is bound at residue 533 to 540 (GPSGAGKT). Residues 859-1056 (QQYRYFLGRL…ALEAFVVSNA (198 aa)) enclose the ABC transmembrane type-2 domain. 6 helical membrane passes run 879-899 (LAVD…LAKV), 904-924 (FGAM…KITA), 954-974 (TVDH…FYFF), 986-1006 (VVLI…AILF), 1008-1028 (PGPA…IATS), and 1084-1104 (CLVF…FCMV).

Belongs to the ABC transporter superfamily. ABCG family. Eye pigment precursor importer (TC 3.A.1.204) subfamily.

It localises to the membrane. This Arabidopsis thaliana (Mouse-ear cress) protein is ABC transporter G family member 28 (ABCG28).